Consider the following 213-residue polypeptide: Cytochrome c biogenesis ATP-binding export protein CcmA (213 aa).

Positions 8 to 213 (LQATALTCER…RDIDLGQWAA (206 aa)) constitute an ABC transporter domain. An ATP-binding site is contributed by 40-47 (GPNGSGKT).

Belongs to the ABC transporter superfamily. CcmA exporter (TC 3.A.1.107) family. As to quaternary structure, the complex is composed of two ATP-binding proteins (CcmA) and two transmembrane proteins (CcmB).

The protein resides in the cell inner membrane. It carries out the reaction heme b(in) + ATP + H2O = heme b(out) + ADP + phosphate + H(+). Its function is as follows. Part of the ABC transporter complex CcmAB involved in the biogenesis of c-type cytochromes; once thought to export heme, this seems not to be the case, but its exact role is uncertain. Responsible for energy coupling to the transport system. This Pseudomonas savastanoi pv. phaseolicola (strain 1448A / Race 6) (Pseudomonas syringae pv. phaseolicola (strain 1448A / Race 6)) protein is Cytochrome c biogenesis ATP-binding export protein CcmA.